The sequence spans 311 residues: Mycinamicin-resistance protein MyrB (311 aa).

Positions 27, 29, 54, 75, and 98 each coordinate S-adenosyl-L-methionine. The segment at 272–311 (PAPAGRSVRARPGSVGPDRSLPPRGLRSGPPRARRRGGGA) is disordered. Over residues 293 to 302 (PPRGLRSGPP) the composition is skewed to low complexity.

It belongs to the class I-like SAM-binding methyltransferase superfamily. rRNA adenine N(6)-methyltransferase family.

Functionally, confers resistance to macrolide, lincosamide and streptogramin B antibiotics. The polypeptide is Mycinamicin-resistance protein MyrB (myrB) (Micromonospora griseorubida).